The chain runs to 215 residues: Thiopurine S-methyltransferase (215 aa).

S-adenosyl-L-methionine-binding residues include tryptophan 10, leucine 45, glutamate 66, and arginine 123.

The protein belongs to the class I-like SAM-binding methyltransferase superfamily. TPMT family.

It is found in the cytoplasm. The catalysed reaction is S-adenosyl-L-methionine + a thiopurine = S-adenosyl-L-homocysteine + a thiopurine S-methylether.. This chain is Thiopurine S-methyltransferase, found in Pseudomonas putida (strain W619).